The primary structure comprises 326 residues: Tetraacyldisaccharide 4'-kinase (326 aa).

Residue 54–61 participates in ATP binding; it reads SVGGTGKT.

This sequence belongs to the LpxK family.

It catalyses the reaction a lipid A disaccharide + ATP = a lipid IVA + ADP + H(+). Its pathway is glycolipid biosynthesis; lipid IV(A) biosynthesis; lipid IV(A) from (3R)-3-hydroxytetradecanoyl-[acyl-carrier-protein] and UDP-N-acetyl-alpha-D-glucosamine: step 6/6. Functionally, transfers the gamma-phosphate of ATP to the 4'-position of a tetraacyldisaccharide 1-phosphate intermediate (termed DS-1-P) to form tetraacyldisaccharide 1,4'-bis-phosphate (lipid IVA). This is Tetraacyldisaccharide 4'-kinase from Rickettsia canadensis (strain McKiel).